The following is a 2085-amino-acid chain: MAAAEVDLGYLSAQANISQVDLETVVSAPTADLVKSVLAAVLSKIRELEQDKFHLNVELEGAIRGAESRCEQFKATSDKALKEVEELRQKLQSEESARRTLENELQTLKSSGSASLSEIETLRARIASLETSNRETLAIVDSKASANAALSEELQKQHQKILKLNQEINNLNQAVQTAQTAANSAKYREESLKQELELAKKNNDWYDNELKTKAAENLKIRKEKGAQIAQLQREKEDALSTIQSLQKTEQQLRKRLQEAQSKAEEALTKVQQLQESAARAEESFRQELESSKRLVELKDQQAQTHRNRLKEVELRLEKVKDDSAEEIRRVRRELEQAKEDLSQSEQQVQDLQSEVDRLRTLVESHDGVPGSVPQTPRANGSLLARPSSPFGTPASLRGKATQRATETLEELLKVKAQLASEQRRSQKLQEDLDDAVSMLEAKLPEIDELNAESERLRNEVIQMSEIMQQSYEERDAAVKAARKAEAAASQAQAEVKILRAQLRDLSTQIHVLIFNAHAKEKGMDQLTEEEIAQFERLQRGEISEGALEDLSDTHRFITERFTVFKDIYELQQKNEELLKLTRELATKMENEEALAAQRQAAQEHEEVQQLRATVAALQDEVRSITIRMKSHMTERDMFRRMLQQRATPAEIQKVLGTQADGEQREVLPSVEQPHANEAQLAAALRELQAQFDAYRNDQVTDRNAMREQIDKLSGEKGSLQSEVTKLSSQLTLATERYNMLESNFKALQSENQELQKRNQSLSEAAAKQDIRTQQVAEDLVEARGLVESLRSENANLKAEKALWRTIQERLTQDNESLAQEKTRLNGLLASQQSLLNERELSEAETKRRLQAQIDSLEAELSTTKRKLSEEIEESKKVQLRKEFDAQQFQKRIDELTSMISQVKEENIQVKTTRDHLQARVSELEIEVRNAQERAERLRPLPTPRAPAAAEQPSEEAQARIEELEGEVQELKNNLDLLTVQLEHAKQQAEQFKQLSKDMEEELSSLNESHEQYRQEMDAALASKANTINELQQRVEALTAELSNTNNELNMLRDSQSDVARKFEEKERMLNAEIARLKDEEERYKEAARFHQQDLRAQAEIATKAQQDYEQELVKHAEAAKLLQQLRAEHNELKTQAAAWRAEADSAKISLAQSEQSWEERRQRLEQEIAEIKARRDDMAAQNKLLHQQLDAVTAQITALQQKRTQGDVSGEAAAPAIADMATEGLRELNSYLRREKEILEVQYDIKVQEAKRLQQQLEYTQSQLDETRLKLEQERASQADSTRTSLTHKELMEKLNELNLIRESNVTLRNENQRAQALLEQKAARITELEAKIQPLEARIAELELDKGFKEEEIRQLQEARDGLQKRIETILSKYGQADPQEVEQLKAMIAALEGERDVLKQSEQALQQKVKEAENALETKTNEWKATREKLAEDFKARFRNMKTQRDEATNEKNTLQATLDGVKEQLAALEKELETTKQQLATATEKNTSLQQQLAASSTEQPAAAPVSAAPSDQINELTQQLQAVKQQLESVSAQKAAAEAQVEQLKQELAAAIAERDRALAATSGGDVATAETSVSAQPSAGLSDEERKALEEKIAAAEAKAAEFEKRAKELEEQADNIVKQRSDKMKTALNKKLQESKEAMEKQIQEEKAKLQAEFDLKLQQELAIIKAEQQTAGPQNGVPATPVKTEANAAPGTPVPDITNMTDAQIREAVAKNPTISAIVKSNVKRMVAAETKKIKEEIEAALKAEYEQKITNAKEQATALTEKKSALRINMLDRQHKTAQAKLAIVETAAKETPQKPVVEVWNIAKDAKPPAPAQAPAPAPASAAPSPAPTPAQPVAPATAAPAAPAQAPSAAPPKEETKQEAKTTTAAPPSAIPKPAVNPFTAPLNPFGAPAPTSNIPAPPQAGQQPQQTQPQQPQQPQQQQQQQKGQQQQQQQQQQQQGQQQQQQGQQQAGGQNQPQRMGIPVPAGRGGPGGARTARGLYQAGPRGARGGRGGGFVGAGRGAGGAAGGLNPNAGEFTPGGATATAAAAAAAGGAGGSAGAGNAGNKRQRDGEGGQPQGERGGKRARGGGGGGGGNQ.

Coiled coils occupy residues 44 to 367 (KIRE…SHDG), 399 to 513 (KATQ…HVLI), 568 to 630 (YELQ…RMKS), 675 to 1205 (ANEA…KRTQ), 1232 to 1667 (LRRE…LQQE), and 1744 to 1799 (EIEA…AAKE). The interval 365-398 (HDGVPGSVPQTPRANGSLLARPSSPFGTPASLRG) is disordered. The interval 934–953 (AERLRPLPTPRAPAAAEQPS) is disordered. Residues 1159–1166 (ERRQRLEQ) carry the Nuclear localization signal motif. The span at 1482 to 1503 (LATATEKNTSLQQQLAASSTEQ) shows a compositional bias: polar residues. 2 disordered regions span residues 1482–1514 (LATATEKNTSLQQQLAASSTEQPAAAPVSAAPS) and 1567–1591 (SGGDVATAETSVSAQPSAGLSDEER). The segment covering 1504–1514 (PAAAPVSAAPS) has biased composition (low complexity). Over residues 1574–1584 (AETSVSAQPSA) the composition is skewed to polar residues. The tract at residues 1816-2085 (KPPAPAQAPA…GGGGGGGGNQ (270 aa)) is disordered. The span at 1817–1827 (PPAPAQAPAPA) shows a compositional bias: pro residues. 3 stretches are compositionally biased toward low complexity: residues 1843 to 1858 (VAPATAAPAAPAQAPS), 1910 to 1974 (QAGQ…PVPA), and 1982 to 1994 (ARTARGLYQAGPR). Residues 1995–2016 (GARGGRGGGFVGAGRGAGGAAG) show a composition bias toward gly residues. Over residues 2028–2040 (GGATATAAAAAAA) the composition is skewed to low complexity. 2 stretches are compositionally biased toward gly residues: residues 2041–2051 (GGAGGSAGAGN) and 2076–2085 (GGGGGGGGNQ).

As to quaternary structure, the nuclear pore complex (NPC) constitutes the exclusive means of nucleocytoplasmic transport. NPCs allow the passive diffusion of ions and small molecules and the active, nuclear transport receptor-mediated bidirectional transport of macromolecules such as proteins, RNAs, ribonucleoparticles (RNPs), and ribosomal subunits across the nuclear envelope. The 55-60 MDa NPC is composed of at least 28 different subunits: AMO1, ELYS, GLE1, GLE2, MLP1, NDC1, NIC96, NSP1, NUP133, NUP145, NUP152, NUP159, NUP170, NUP188, NUP192, NUP37, NUP49, NUP53, NUP56, NUP57, NUP82, NUP84, NUP85, POM152, POM33, POM34, SEC13 and SEH1. Due to its 8-fold rotational symmetry, all subunits are present with 8 copies or multiples thereof.

The protein resides in the nucleus. Involved in the structural and functional organization of perinuclear chromatin. Associates with the nuclear pore complex and form filamentous structures along the nuclear periphery. The sequence is that of Protein MLP1 homolog (MLP1) from Chaetomium thermophilum (strain DSM 1495 / CBS 144.50 / IMI 039719) (Thermochaetoides thermophila).